Here is a 176-residue protein sequence, read N- to C-terminus: Ubiquinol-cytochrome c reductase iron-sulfur subunit (176 aa).

A helical membrane pass occupies residues 15–36 (FLFVATGAAAAVGGAAALWPFI). The 88-residue stretch at 87 to 174 (ARAVNVASLP…YQFVSDTKIQ (88 aa)) folds into the Rieske domain. 4 residues coordinate [2Fe-2S] cluster: Cys-119, His-121, Cys-138, and His-141. Cysteines 124 and 140 form a disulfide.

Belongs to the Rieske iron-sulfur protein family. In terms of assembly, the main subunits of complex b-c1 are: cytochrome b, cytochrome c1 and the Rieske protein. It depends on [2Fe-2S] cluster as a cofactor.

It is found in the cell membrane. It carries out the reaction a quinol + 2 Fe(III)-[cytochrome c](out) = a quinone + 2 Fe(II)-[cytochrome c](out) + 2 H(+)(out). In terms of biological role, component of the ubiquinol-cytochrome c reductase complex (complex III or cytochrome b-c1 complex), which is a respiratory chain that generates an electrochemical potential coupled to ATP synthesis. In Bradyrhizobium diazoefficiens (strain JCM 10833 / BCRC 13528 / IAM 13628 / NBRC 14792 / USDA 110), this protein is Ubiquinol-cytochrome c reductase iron-sulfur subunit (petA).